The chain runs to 204 residues: Ribonuclease HII (204 aa).

Residues 13 to 204 (GPVAGCDEAG…VRRAARLHSS (192 aa)) enclose the RNase H type-2 domain. A divalent metal cation contacts are provided by D19, E20, and D113.

It belongs to the RNase HII family. It depends on Mn(2+) as a cofactor. The cofactor is Mg(2+).

Its subcellular location is the cytoplasm. The catalysed reaction is Endonucleolytic cleavage to 5'-phosphomonoester.. In terms of biological role, endonuclease that specifically degrades the RNA of RNA-DNA hybrids. The sequence is that of Ribonuclease HII from Cutibacterium acnes (strain DSM 16379 / KPA171202) (Propionibacterium acnes).